Here is a 95-residue protein sequence, read N- to C-terminus: Protein TusB (95 aa).

This sequence belongs to the DsrH/TusB family. As to quaternary structure, heterohexamer, formed by a dimer of trimers. The hexameric TusBCD complex contains 2 copies each of TusB, TusC and TusD. The TusBCD complex interacts with TusE.

It is found in the cytoplasm. Its function is as follows. Part of a sulfur-relay system required for 2-thiolation of 5-methylaminomethyl-2-thiouridine (mnm(5)s(2)U) at tRNA wobble positions. The chain is Protein TusB from Serratia proteamaculans (strain 568).